A 219-amino-acid polypeptide reads, in one-letter code: Ribose-5-phosphate isomerase A (219 aa).

Substrate-binding positions include 28–31, 81–84, and 94–97; these read TGST, DGAD, and KGGG. The active-site Proton acceptor is the Glu103. Lys121 provides a ligand contact to substrate.

The protein belongs to the ribose 5-phosphate isomerase family. In terms of assembly, homodimer.

The enzyme catalyses aldehydo-D-ribose 5-phosphate = D-ribulose 5-phosphate. It functions in the pathway carbohydrate degradation; pentose phosphate pathway; D-ribose 5-phosphate from D-ribulose 5-phosphate (non-oxidative stage): step 1/1. Its function is as follows. Catalyzes the reversible conversion of ribose-5-phosphate to ribulose 5-phosphate. In Erwinia tasmaniensis (strain DSM 17950 / CFBP 7177 / CIP 109463 / NCPPB 4357 / Et1/99), this protein is Ribose-5-phosphate isomerase A.